Reading from the N-terminus, the 222-residue chain is UPF0128 protein PF1488 (222 aa).

It belongs to the UPF0128 family.

In Pyrococcus furiosus (strain ATCC 43587 / DSM 3638 / JCM 8422 / Vc1), this protein is UPF0128 protein PF1488.